We begin with the raw amino-acid sequence, 626 residues long: Phosphomethylpyrimidine synthase (626 aa).

Substrate-binding positions include asparagine 237, methionine 266, tyrosine 295, histidine 331, 351–353 (SRG), 392–395 (DGLR), and glutamate 431. Zn(2+) is bound at residue histidine 435. Tyrosine 458 is a substrate binding site. Position 499 (histidine 499) interacts with Zn(2+). Residues cysteine 579, cysteine 582, and cysteine 587 each coordinate [4Fe-4S] cluster.

The protein belongs to the ThiC family. In terms of assembly, homodimer. [4Fe-4S] cluster is required as a cofactor.

It carries out the reaction 5-amino-1-(5-phospho-beta-D-ribosyl)imidazole + S-adenosyl-L-methionine = 4-amino-2-methyl-5-(phosphooxymethyl)pyrimidine + CO + 5'-deoxyadenosine + formate + L-methionine + 3 H(+). It functions in the pathway cofactor biosynthesis; thiamine diphosphate biosynthesis. Catalyzes the synthesis of the hydroxymethylpyrimidine phosphate (HMP-P) moiety of thiamine from aminoimidazole ribotide (AIR) in a radical S-adenosyl-L-methionine (SAM)-dependent reaction. The polypeptide is Phosphomethylpyrimidine synthase (Cupriavidus pinatubonensis (strain JMP 134 / LMG 1197) (Cupriavidus necator (strain JMP 134))).